Consider the following 188-residue polypeptide: dCTP deaminase (188 aa).

DCTP-binding positions include 111–116 (KSTYAR), 135–137 (TLE), glutamine 156, tyrosine 170, and glutamine 180. Glutamate 137 serves as the catalytic Proton donor/acceptor.

It belongs to the dCTP deaminase family. As to quaternary structure, homotrimer.

The enzyme catalyses dCTP + H2O + H(+) = dUTP + NH4(+). Its pathway is pyrimidine metabolism; dUMP biosynthesis; dUMP from dCTP (dUTP route): step 1/2. Functionally, catalyzes the deamination of dCTP to dUTP. The sequence is that of dCTP deaminase from Methylococcus capsulatus (strain ATCC 33009 / NCIMB 11132 / Bath).